The following is an 81-amino-acid chain: Acyl carrier protein (81 aa).

Residues 4-79 (AEIKDKVYDI…QAIDYIVNKK (76 aa)) enclose the Carrier domain. At Ser-39 the chain carries O-(pantetheine 4'-phosphoryl)serine.

It belongs to the acyl carrier protein (ACP) family. In terms of processing, 4'-phosphopantetheine is transferred from CoA to a specific serine of apo-ACP by AcpS. This modification is essential for activity because fatty acids are bound in thioester linkage to the sulfhydryl of the prosthetic group.

Its subcellular location is the cytoplasm. Its pathway is lipid metabolism; fatty acid biosynthesis. Carrier of the growing fatty acid chain in fatty acid biosynthesis. This Chlorobaculum tepidum (strain ATCC 49652 / DSM 12025 / NBRC 103806 / TLS) (Chlorobium tepidum) protein is Acyl carrier protein.